The primary structure comprises 469 residues: MKFHIITLGCPKNTVDSEGMHGILTREGHTAVDSSDGADVVIVNTCSFINAAREETVGVLQELANNKAPGQKLIAAGCMAESHGDVLRSRVPKLDATLSTKEWMRIGSVVAGGVAPSKTTGFGIPLMGGAPSAMPSTGLNLSLTPAATGDSLGAYGDWRTTAITRNKRGPSAYLKISDGCNLRCAFCTIPSFKGDMRSKAVGSILGEARELVEAGVQEIILVAQHLTDYGRDLGMKQNGLGVLLEELAAVVPADRWIRLMYAYPQSVTPDLVETMARLPQLCHYVDMPLQHAHPDTLRRMRRPPDTDKTKAIVNSLRQAMPDLSLRTTFIVGYPGETRDEFKALLEFLEEMQFDRVGMFRYSLEPGTVAGELPDQVAERVKERRWNEAMAVQQVISRARTARFVGQTMKVLVEGTGTDDDGRAIVVGRSYRDAPEVDGLVFGYGAADVGQFAKIAINKTTDYDLWGEIV.

An MTTase N-terminal domain is found at 1 to 115 (MKFHIITLGC…IGSVVAGGVA (115 aa)). C10, C46, C78, C180, C184, and C187 together coordinate [4Fe-4S] cluster. Residues 166 to 398 (NKRGPSAYLK…MAVQQVISRA (233 aa)) enclose the Radical SAM core domain. The 69-residue stretch at 401-469 (ARFVGQTMKV…TDYDLWGEIV (69 aa)) folds into the TRAM domain.

It belongs to the methylthiotransferase family. RimO subfamily. [4Fe-4S] cluster serves as cofactor.

The protein resides in the cytoplasm. The catalysed reaction is L-aspartate(89)-[ribosomal protein uS12]-hydrogen + (sulfur carrier)-SH + AH2 + 2 S-adenosyl-L-methionine = 3-methylsulfanyl-L-aspartate(89)-[ribosomal protein uS12]-hydrogen + (sulfur carrier)-H + 5'-deoxyadenosine + L-methionine + A + S-adenosyl-L-homocysteine + 2 H(+). In terms of biological role, catalyzes the methylthiolation of an aspartic acid residue of ribosomal protein uS12. This is Ribosomal protein uS12 methylthiotransferase RimO from Herpetosiphon aurantiacus (strain ATCC 23779 / DSM 785 / 114-95).